Reading from the N-terminus, the 901-residue chain is HTH-type transcriptional regulator MalT (901 aa).

Ser-39–Thr-46 provides a ligand contact to ATP. Residues Glu-829–Leu-894 enclose the HTH luxR-type domain. A DNA-binding region (H-T-H motif) is located at residues Asn-853–Arg-872.

Belongs to the MalT family. In terms of assembly, monomer in solution. Oligomerizes to an active state in the presence of the positive effectors ATP and maltotriose.

Its activity is regulated as follows. Activated by ATP and maltotriose, which are both required for DNA binding. Functionally, positively regulates the transcription of the maltose regulon whose gene products are responsible for uptake and catabolism of malto-oligosaccharides. Specifically binds to the promoter region of its target genes, recognizing a short DNA motif called the MalT box. The chain is HTH-type transcriptional regulator MalT from Cronobacter sakazakii (strain ATCC BAA-894) (Enterobacter sakazakii).